The sequence spans 100 residues: NADH-quinone oxidoreductase subunit K (100 aa).

3 consecutive transmembrane segments (helical) span residues 3–23 (LNAY…GIFL), 29–49 (ISIM…FVAF), and 60–80 (IFTF…LAIL).

It belongs to the complex I subunit 4L family. NDH-1 is composed of 14 different subunits. Subunits NuoA, H, J, K, L, M, N constitute the membrane sector of the complex.

The protein localises to the cell inner membrane. The enzyme catalyses a quinone + NADH + 5 H(+)(in) = a quinol + NAD(+) + 4 H(+)(out). NDH-1 shuttles electrons from NADH, via FMN and iron-sulfur (Fe-S) centers, to quinones in the respiratory chain. The immediate electron acceptor for the enzyme in this species is believed to be ubiquinone. Couples the redox reaction to proton translocation (for every two electrons transferred, four hydrogen ions are translocated across the cytoplasmic membrane), and thus conserves the redox energy in a proton gradient. The polypeptide is NADH-quinone oxidoreductase subunit K (Magnetococcus marinus (strain ATCC BAA-1437 / JCM 17883 / MC-1)).